Here is a 281-residue protein sequence, read N- to C-terminus: 3-methyl-2-oxobutanoate hydroxymethyltransferase (281 aa).

Residues 1 to 20 (MSEQTIYGANTPGGSGPRTK) form a disordered region. Mg(2+) contacts are provided by aspartate 62 and aspartate 101. Residues 62 to 63 (DS), aspartate 101, and lysine 131 each bind 3-methyl-2-oxobutanoate. Glutamate 133 is a Mg(2+) binding site. Catalysis depends on glutamate 199, which acts as the Proton acceptor.

The protein belongs to the PanB family. In terms of assembly, homodecamer; pentamer of dimers. It depends on Mg(2+) as a cofactor.

The protein localises to the cytoplasm. It carries out the reaction 3-methyl-2-oxobutanoate + (6R)-5,10-methylene-5,6,7,8-tetrahydrofolate + H2O = 2-dehydropantoate + (6S)-5,6,7,8-tetrahydrofolate. It functions in the pathway cofactor biosynthesis; (R)-pantothenate biosynthesis; (R)-pantoate from 3-methyl-2-oxobutanoate: step 1/2. Its function is as follows. Catalyzes the reversible reaction in which hydroxymethyl group from 5,10-methylenetetrahydrofolate is transferred onto alpha-ketoisovalerate to form ketopantoate. The polypeptide is 3-methyl-2-oxobutanoate hydroxymethyltransferase (Mycobacterium bovis (strain ATCC BAA-935 / AF2122/97)).